Reading from the N-terminus, the 112-residue chain is MNFDMSKLMQQAQKMQEQMKKAQQERENMEVIGESGAGLVTVTMTGKYDVKSVSIDNSLMSEDKEILEDLIAAAVNSAVKKVEENSTASSDIHKMAKDAGIDLPSGINFPFK.

The tract at residues 1–27 (MNFDMSKLMQQAQKMQEQMKKAQQERE) is disordered. Residues 17–27 (EQMKKAQQERE) show a composition bias toward basic and acidic residues.

Belongs to the YbaB/EbfC family. Homodimer.

It is found in the cytoplasm. Its subcellular location is the nucleoid. Binds to DNA and alters its conformation. May be involved in regulation of gene expression, nucleoid organization and DNA protection. This Francisella tularensis subsp. novicida (strain U112) protein is Nucleoid-associated protein FTN_1196.